A 264-amino-acid chain; its full sequence is Acyl-[acyl-carrier-protein]--UDP-N-acetylglucosamine O-acyltransferase (264 aa).

The protein belongs to the transferase hexapeptide repeat family. LpxA subfamily. Homotrimer.

It is found in the cytoplasm. The catalysed reaction is a (3R)-hydroxyacyl-[ACP] + UDP-N-acetyl-alpha-D-glucosamine = a UDP-3-O-[(3R)-3-hydroxyacyl]-N-acetyl-alpha-D-glucosamine + holo-[ACP]. Its pathway is glycolipid biosynthesis; lipid IV(A) biosynthesis; lipid IV(A) from (3R)-3-hydroxytetradecanoyl-[acyl-carrier-protein] and UDP-N-acetyl-alpha-D-glucosamine: step 1/6. Involved in the biosynthesis of lipid A, a phosphorylated glycolipid that anchors the lipopolysaccharide to the outer membrane of the cell. The polypeptide is Acyl-[acyl-carrier-protein]--UDP-N-acetylglucosamine O-acyltransferase (Rickettsia typhi (strain ATCC VR-144 / Wilmington)).